The following is a 254-amino-acid chain: 5-keto-D-gluconate 5-reductase (254 aa).

Leu-13–Ile-37 contributes to the NADP(+) binding site. Residue Ser-145 coordinates substrate. The Proton acceptor role is filled by Tyr-158.

This sequence belongs to the short-chain dehydrogenases/reductases (SDR) family.

It catalyses the reaction D-gluconate + NAD(+) = 5-dehydro-D-gluconate + NADH + H(+). It carries out the reaction D-gluconate + NADP(+) = 5-dehydro-D-gluconate + NADPH + H(+). The protein operates within carbohydrate acid metabolism; L-idonate degradation. Catalyzes the reduction of 5-keto-D-gluconate to D-gluconate, using either NADH or NADPH. Is likely involved in an L-idonate degradation pathway that allows E.coli to utilize L-idonate as the sole carbon and energy source. Is also able to catalyze the reverse reaction in vitro, but the D-gluconate oxidation by the enzyme can only proceed with NAD. The sequence is that of 5-keto-D-gluconate 5-reductase from Escherichia coli O6:H1 (strain CFT073 / ATCC 700928 / UPEC).